The chain runs to 115 residues: U3-lycotoxin-Ls1a (115 aa).

Residues 1 to 20 (MKFVLLFGVLLVTLFSYSSA) form the signal peptide. The propeptide occupies 21-44 (EMLDDFDQADEDELLSLIEKEEAR). Cystine bridges form between cysteine 48–cysteine 63, cysteine 55–cysteine 72, cysteine 62–cysteine 87, and cysteine 74–cysteine 85.

The protein belongs to the neurotoxin 19 (CSTX) family. 01 subfamily. Expressed by the venom gland.

Its subcellular location is the secreted. This Lycosa singoriensis (Wolf spider) protein is U3-lycotoxin-Ls1a.